The chain runs to 196 residues: Fe/S biogenesis protein NfuA (196 aa).

[4Fe-4S] cluster-binding residues include Cys-154 and Cys-157.

The protein belongs to the NfuA family. In terms of assembly, homodimer. [4Fe-4S] cluster serves as cofactor.

Functionally, involved in iron-sulfur cluster biogenesis. Binds a 4Fe-4S cluster, can transfer this cluster to apoproteins, and thereby intervenes in the maturation of Fe/S proteins. Could also act as a scaffold/chaperone for damaged Fe/S proteins. This chain is Fe/S biogenesis protein NfuA, found in Blochmanniella pennsylvanica (strain BPEN).